We begin with the raw amino-acid sequence, 173 residues long: MPNKRNVELLATLKENLERAQGSFFLVNYQGLPAKETHALRQALKQNGARLFVAKNTLIRLALKELGLPELDGLQGPSAVVFYEDPVAAAKTLVQFAKSNPKGIPQVKSGLLQGQILTAKDVEALAELPTMDELRAELVGVLQAPMAELVGVLGGVARELVGILEAYAEKKAA.

It belongs to the universal ribosomal protein uL10 family. In terms of assembly, part of the ribosomal stalk of the 50S ribosomal subunit. The N-terminus interacts with L11 and the large rRNA to form the base of the stalk. The C-terminus forms an elongated spine to which L12 dimers bind in a sequential fashion forming a multimeric L10(L12)X complex.

Functionally, forms part of the ribosomal stalk, playing a central role in the interaction of the ribosome with GTP-bound translation factors. The chain is Large ribosomal subunit protein uL10 from Thermus thermophilus (strain ATCC BAA-163 / DSM 7039 / HB27).